The chain runs to 170 residues: Double homeobox protein 1 (170 aa).

DNA-binding regions (homeobox) lie at residues 19–78 (GRRM…LRQH) and 94–153 (GRRK…RGQS). Positions 75–100 (LRQHRRQSRPWPGRRDPQKGRRKRTA) are disordered.

This sequence belongs to the paired homeobox family. Expressed in rhabdomyosarcoma TE671 cells as well as in several other normal and cancer cells.

It localises to the nucleus. Its function is as follows. Probable transcription activator. Binds the P5 DNA element sequence 5'-GATCTGAGTCTAATTGAGAATTACTGTAC-3'. In Homo sapiens (Human), this protein is Double homeobox protein 1 (DUX1).